Reading from the N-terminus, the 239-residue chain is MKNDVISPEFDENGRPLRRIRSFVRRQGRLTKGQEHALENYWPVMGVEFSEAPVDFATLFGREAPVTLEIGFGMGASLVAMAKARPEQNFLGIEVHSPGVGACLASAHEEGVENLRVMCHDAVEVLHKMIPDNSLSMVQLFFPDPWHKARHNKRRIVQVPFAELVLSKLKLGGVFHMATDWEAYAEHMLEVMSSIDGYKNLSESNDYVPRPESRPVTKFEQRGHRLGHGVWDLMFERVK.

Residues Glu-69, Glu-94, Asp-121, and Asp-144 each coordinate S-adenosyl-L-methionine. Asp-144 is a catalytic residue. Position 148 (Lys-148) interacts with substrate. The tract at residues 150–155 is interaction with RNA; the sequence is RHNKRR. Substrate contacts are provided by residues Asp-180 and 217-220; that span reads TKFE.

The protein belongs to the class I-like SAM-binding methyltransferase superfamily. TrmB family. As to quaternary structure, monomer.

The enzyme catalyses guanosine(46) in tRNA + S-adenosyl-L-methionine = N(7)-methylguanosine(46) in tRNA + S-adenosyl-L-homocysteine. The protein operates within tRNA modification; N(7)-methylguanine-tRNA biosynthesis. Functionally, catalyzes the formation of N(7)-methylguanine at position 46 (m7G46) in tRNA. This is tRNA (guanine-N(7)-)-methyltransferase from Salmonella choleraesuis (strain SC-B67).